Consider the following 497-residue polypeptide: Nitrogenase molybdenum-iron protein alpha chain (497 aa).

Residues Cys64, Cys90, and Cys156 each contribute to the [8Fe-7S] cluster site. [7Fe-Mo-9S-C-homocitryl] cluster-binding residues include Cys282 and His449.

It belongs to the NifD/NifK/NifE/NifN family. Tetramer of two alpha and two beta chains. Forms complex with the iron protein (nitrogenase component 2). [8Fe-7S] cluster is required as a cofactor. The cofactor is [7Fe-Mo-9S-C-homocitryl] cluster.

It catalyses the reaction N2 + 8 reduced [2Fe-2S]-[ferredoxin] + 16 ATP + 16 H2O = H2 + 8 oxidized [2Fe-2S]-[ferredoxin] + 2 NH4(+) + 16 ADP + 16 phosphate + 6 H(+). In terms of biological role, this molybdenum-iron protein is part of the nitrogenase complex that catalyzes the key enzymatic reactions in nitrogen fixation. This Nostoc sp. (strain PCC 7120 / SAG 25.82 / UTEX 2576) protein is Nitrogenase molybdenum-iron protein alpha chain (nifD).